An 84-amino-acid chain; its full sequence is UPF0153 protein YeiW (84 aa).

This sequence belongs to the UPF0153 family.

The polypeptide is UPF0153 protein YeiW (yeiW) (Escherichia coli (strain K12)).